A 224-amino-acid polypeptide reads, in one-letter code: Transposase for insertion sequence-like element IS431mec (224 aa).

The segment at residues 33–52 (EILRERGVNVHHSTVYRWVQ) is a DNA-binding region (H-T-H motif). Residues 73–222 (WRIDETYIKI…SPCHEISIML (150 aa)) form the Integrase catalytic domain.

In terms of biological role, involved in the transposition of the insertion sequence. This chain is Transposase for insertion sequence-like element IS431mec (tnp), found in Staphylococcus aureus (strain NCTC 8325 / PS 47).